A 238-amino-acid chain; its full sequence is MSMAISIRSSTRPVEVRRLGTVEYLDAWELQRGLVDARVAGGSDALLLLQHPSVYTAGKRTEPHERPADGTPVVDTDRGGKITWHGPGQLVGYPIVGLAEPLDVVNFVRRIEEALIAVCTGLGLDAGRVEGRSGVWLPGDGLRPERKIGAIGIRVSRGTTLHGFALNCDCDLSAFSAIVPCGIADAGVTSLTAELGRRVTVDEVTDAVAARVCDALDGRLAVSGVSVDTYASGVASTQ.

The 181-residue stretch at 40–220 (AGGSDALLLL…RVCDALDGRL (181 aa)) folds into the BPL/LPL catalytic domain. Substrate is bound by residues 78–85 (RGGKITWH), 150–152 (AIG), and 163–165 (GFA). C181 serves as the catalytic Acyl-thioester intermediate.

Belongs to the LipB family.

The protein localises to the cytoplasm. The enzyme catalyses octanoyl-[ACP] + L-lysyl-[protein] = N(6)-octanoyl-L-lysyl-[protein] + holo-[ACP] + H(+). The protein operates within protein modification; protein lipoylation via endogenous pathway; protein N(6)-(lipoyl)lysine from octanoyl-[acyl-carrier-protein]: step 1/2. Its function is as follows. Catalyzes the transfer of endogenously produced octanoic acid from octanoyl-acyl-carrier-protein onto the lipoyl domains of lipoate-dependent enzymes. Lipoyl-ACP can also act as a substrate although octanoyl-ACP is likely to be the physiological substrate. The sequence is that of Octanoyltransferase from Mycobacterium sp. (strain JLS).